Here is a 285-residue protein sequence, read N- to C-terminus: ATP synthase gamma chain (285 aa).

The protein belongs to the ATPase gamma chain family. In terms of assembly, F-type ATPases have 2 components, CF(1) - the catalytic core - and CF(0) - the membrane proton channel. CF(1) has five subunits: alpha(3), beta(3), gamma(1), delta(1), epsilon(1). CF(0) has three main subunits: a, b and c.

Its subcellular location is the cell inner membrane. Its function is as follows. Produces ATP from ADP in the presence of a proton gradient across the membrane. The gamma chain is believed to be important in regulating ATPase activity and the flow of protons through the CF(0) complex. The sequence is that of ATP synthase gamma chain from Protochlamydia amoebophila (strain UWE25).